The chain runs to 110 residues: Cytochrome c oxidase subunit 4B (110 aa).

Helical transmembrane passes span 29-49 (MIAF…VGYE), 55-75 (FVVP…LYYF), and 89-109 (FIYG…TVVW).

Belongs to the cytochrome c oxidase bacterial subunit 4 family.

It is found in the cell membrane. The catalysed reaction is 4 Fe(II)-[cytochrome c] + O2 + 8 H(+)(in) = 4 Fe(III)-[cytochrome c] + 2 H2O + 4 H(+)(out). This is Cytochrome c oxidase subunit 4B (caaD) from Bacillus sp. (strain PS3).